A 274-amino-acid polypeptide reads, in one-letter code: ATP synthase subunit a (274 aa).

A run of 5 helical transmembrane segments spans residues 43–63 (TLNI…LLVF), 103–123 (VIAP…MMDL), 149–169 (DVSI…FYSI), 223–243 (LIFI…LSVP), and 245–265 (AIFH…LTIV).

The protein belongs to the ATPase A chain family. F-type ATPases have 2 components, CF(1) - the catalytic core - and CF(0) - the membrane proton channel. CF(1) has five subunits: alpha(3), beta(3), gamma(1), delta(1), epsilon(1). CF(0) has three main subunits: a(1), b(2) and c(9-12). The alpha and beta chains form an alternating ring which encloses part of the gamma chain. CF(1) is attached to CF(0) by a central stalk formed by the gamma and epsilon chains, while a peripheral stalk is formed by the delta and b chains.

It is found in the cell inner membrane. Functionally, key component of the proton channel; it plays a direct role in the translocation of protons across the membrane. This chain is ATP synthase subunit a, found in Yersinia pestis bv. Antiqua (strain Antiqua).